We begin with the raw amino-acid sequence, 482 residues long: Membrane-bound lytic murein transglycosylase F (482 aa).

The signal sequence occupies residues 1–13 (MKGLFLRIITALA). A non-LT domain region spans residues 14–267 (LLFWAIDMVF…NLKEKYLGHI (254 aa)). Residues 268-482 (SQFDYVDTRS…NLEEIKENKD (215 aa)) form an LT domain region. Glu-312 is an active-site residue.

It in the N-terminal section; belongs to the bacterial solute-binding protein 3 family. In the C-terminal section; belongs to the transglycosylase Slt family.

It is found in the cell outer membrane. It catalyses the reaction Exolytic cleavage of the (1-&gt;4)-beta-glycosidic linkage between N-acetylmuramic acid (MurNAc) and N-acetylglucosamine (GlcNAc) residues in peptidoglycan, from either the reducing or the non-reducing ends of the peptidoglycan chains, with concomitant formation of a 1,6-anhydrobond in the MurNAc residue.. Murein-degrading enzyme that degrades murein glycan strands and insoluble, high-molecular weight murein sacculi, with the concomitant formation of a 1,6-anhydromuramoyl product. Lytic transglycosylases (LTs) play an integral role in the metabolism of the peptidoglycan (PG) sacculus. Their lytic action creates space within the PG sacculus to allow for its expansion as well as for the insertion of various structures such as secretion systems and flagella. The protein is Membrane-bound lytic murein transglycosylase F of Haemophilus influenzae (strain PittEE).